Reading from the N-terminus, the 76-residue chain is Repressor protein of division inhibition gene dicB (76 aa).

A DNA-binding region spans residues 13 to 33 (KTKLAQAAGIRLASLYSWKGD).

Its function is as follows. This protein is a repressor of division inhibition gene dicB. This chain is Repressor protein of division inhibition gene dicB (dicC), found in Escherichia coli (strain K12).